Consider the following 308-residue polypeptide: NADH-cytochrome b5 reductase 1 (308 aa).

The chain crosses the membrane as a helical span at residues 29 to 49; it reads VASSPAFLVAAAAIVIAAAFY. Residues 64–167 enclose the FAD-binding FR-type domain; that stretch reads SIWKEFPLQK…KGPKGNFKYT (104 aa). Residues 147 to 162 and 173 to 205 each bind FAD; these read ASLKIGDTLRVKGPKG and HLGMIAGGTGLAPMIQIVRAILQNPPDRTNITL.

This sequence belongs to the flavoprotein pyridine nucleotide cytochrome reductase family. As to quaternary structure, monomer. Component of the 2-(3-amino-3-carboxypropyl)histidine synthase complex composed of DPH1, DPH2, DPH3 and a NADH-dependent reductase, predominantly MCR1.1. FAD is required as a cofactor.

It is found in the mitochondrion outer membrane. It carries out the reaction 2 Fe(III)-[cytochrome b5] + NADH = 2 Fe(II)-[cytochrome b5] + NAD(+) + H(+). It catalyses the reaction 2 Fe(3+)-[Dph3] + NADH = 2 Fe(2+)-[Dph3] + NAD(+) + H(+). Its pathway is protein modification; peptidyl-diphthamide biosynthesis. Its function is as follows. NADH-dependent reductase for DPH3 and cytochrome b5. Required for the first step of diphthamide biosynthesis, a post-translational modification of histidine which occurs in elongation factor 2. DPH1 and DPH2 transfer a 3-amino-3-carboxypropyl (ACP) group from S-adenosyl-L-methionine (SAM) to a histidine residue, the reaction is assisted by a reduction system comprising DPH3 and a NADH-dependent reductase, predominantly MCR1.1. By reducing DPH3, also involved in the formation of the tRNA wobble base modification mcm5s 2U (5-methoxycarbonylmethyl-2-thiouridine), mediated by the elongator complex. The cytochrome b5/NADH cytochrome b5 reductase electron transfer system supports the catalytic activity of several sterol biosynthetic enzymes. The polypeptide is NADH-cytochrome b5 reductase 1 (MCR1.1) (Laccaria bicolor (strain S238N-H82 / ATCC MYA-4686) (Bicoloured deceiver)).